Reading from the N-terminus, the 69-residue chain is Cell division protein ZapB (69 aa).

Residues 3-60 (LELFNQLEQKVQNAVETIEMLKMEAEELREENTRLKQERDEWERRLNGLLGKFQEIED) are a coiled coil.

It belongs to the ZapB family. As to quaternary structure, homodimer. The ends of the coiled-coil dimer bind to each other, forming polymers. Interacts with FtsZ.

Its subcellular location is the cytoplasm. Functionally, non-essential, abundant cell division factor that is required for proper Z-ring formation. It is recruited early to the divisome by direct interaction with FtsZ, stimulating Z-ring assembly and thereby promoting cell division earlier in the cell cycle. Its recruitment to the Z-ring requires functional FtsA or ZipA. The polypeptide is Cell division protein ZapB (Chromohalobacter salexigens (strain ATCC BAA-138 / DSM 3043 / CIP 106854 / NCIMB 13768 / 1H11)).